A 427-amino-acid chain; its full sequence is Alpha/beta hydrolase gkaG (427 aa).

Residue Asp-368 is part of the active site.

Belongs to the AB hydrolase superfamily. In terms of assembly, homodimer.

Its pathway is mycotoxin biosynthesis. Alpha/beta hydrolase; part of the gene cluster that mediates the biosynthesis of GKK1032, fungal natural products containing a macrocyclic para-cyclophane connected to a decahydrofluorene ring system that show potent antitumor activities. Within the pathway, gkaG catalyzes the Knoevenagel condensation that affords the 3-pyrrolin-2-one ring, using as substrate the polyketide-tyrosyl acyl thioester product of gkaA. The pathway begins with the PKS-NRPS gkaA which, with the help of the trans-enoyl reductase gkaC, synthesizes the polyketide-tyrosyl acyl thioester product which can be reductively off-loaded by the terminal reductase (R) domain in gkaA. The alpha/beta hydrolase gkaG is then required to catalyze the subsequent Knoevenagel condensation that affords the 3-pyrrolin-2-one ring, whereas the three proteins gkaB, gkaX and gkaZ then function synergistically to form the cyclophane. The sequence is that of Alpha/beta hydrolase gkaG from Penicillium citrinum.